The primary structure comprises 207 residues: Vascular endothelial growth factor B (207 aa).

The first 21 residues, 1–21 (MSPLLRRLLLAVLLQLAPAQA), serve as a signal peptide directing secretion. Disulfide bonds link C47-C89, C78-C122, and C82-C124. The segment covering 124–139 (CRPKKRESAVKPDRAS) has biased composition (basic and acidic residues). Residues 124 to 207 (CRPKKRESAV…AASSVVKGGA (84 aa)) are disordered. Positions 174 to 201 (PSAHAAPSAASALTPGPATAAADAAASS) are enriched in low complexity.

The protein belongs to the PDGF/VEGF growth factor family. Homodimer; disulfide-linked. Can also form heterodimer with VEGF. VEGF-B186 is O-glycosylated.

It is found in the secreted. Its function is as follows. Growth factor for endothelial cells. VEGF-B167 binds heparin and neuropilin-1 whereas the binding to neuropilin-1 of VEGF-B186 is regulated by proteolysis. In Bos taurus (Bovine), this protein is Vascular endothelial growth factor B (VEGFB).